Here is a 155-residue protein sequence, read N- to C-terminus: UPF0178 protein ACIAD2644 (155 aa).

The disordered stretch occupies residues 120–155 (GAGVQTGGPPPISERDKREFSSALDQTILKQKRKTA).

Belongs to the UPF0178 family.

The sequence is that of UPF0178 protein ACIAD2644 from Acinetobacter baylyi (strain ATCC 33305 / BD413 / ADP1).